We begin with the raw amino-acid sequence, 226 residues long: LysM and putative peptidoglycan-binding domain-containing protein 1 (226 aa).

A phosphoserine mark is found at Ser-23 and Ser-33. The 45-residue stretch at 40 to 84 (LEHQLEPGDTLAGLALKYGVTMEQIKRTNRLYTNDSIFLKKTLYI) folds into the LysM domain. The tract at residues 95-156 (NGLDSEEEND…PSHDLSASDF (62 aa)) is disordered. A compositionally biased stretch (acidic residues) spans 98–107 (DSEEENDGEE). At Ser-99 the chain carries Phosphoserine. Over residues 142–151 (QETSTPSHDL) the composition is skewed to polar residues. Phosphoserine occurs at positions 165, 180, 193, and 211. A disordered region spans residues 170-226 (AAAQKLRKGESGVPEEDTGLYPSSPRMQQRAVLGPVPLTRTSRTQTLRDQEDEIFKL). Over residues 215–226 (TLRDQEDEIFKL) the composition is skewed to basic and acidic residues.

The sequence is that of LysM and putative peptidoglycan-binding domain-containing protein 1 (Lysmd1) from Mus musculus (Mouse).